Reading from the N-terminus, the 238-residue chain is Thrombin-like enzyme halystase (238 aa).

In terms of domain architecture, Peptidase S1 spans 1-229 (IIGGDECNIN…HLDWIKSIIA (229 aa)). Disulfide bonds link cysteine 7–cysteine 141, cysteine 28–cysteine 44, cysteine 76–cysteine 236, cysteine 120–cysteine 190, cysteine 152–cysteine 169, and cysteine 180–cysteine 205. Catalysis depends on histidine 43, which acts as the Charge relay system. An N-linked (GlcNAc...) asparagine glycan is attached at asparagine 81. Aspartate 88 (charge relay system) is an active-site residue. An N-linked (GlcNAc...) asparagine glycan is attached at asparagine 100. Serine 184 serves as the catalytic Charge relay system.

This sequence belongs to the peptidase S1 family. Snake venom subfamily. As to quaternary structure, monomer. In terms of tissue distribution, expressed by the venom gland.

It is found in the secreted. Its activity is regulated as follows. Inhibited by diisopropylfluorophosphate (DFP), PMSF and leupeptin. Thrombin-like snake venom serine protease. Cleaves fibrinogen (beta chain of fibrinogen (FGB) and more slowly alpha chain (FGA)) without inducing fibrin clotting and cleaves kininogen to produce bradykinin (KNG), resulting in the reduction of blood pressure. The protein is Thrombin-like enzyme halystase of Gloydius blomhoffii (Mamushi).